The chain runs to 387 residues: Alpha-maltose-1-phosphate synthase (387 aa).

Belongs to the glycosyltransferase group 1 family.

The catalysed reaction is ADP-alpha-D-glucose + alpha-D-glucose 1-phosphate = alpha-maltose 1-phosphate + ADP + H(+). Its pathway is capsule biogenesis; capsule polysaccharide biosynthesis. The protein operates within glycan biosynthesis; glycogen biosynthesis. Involved in the biosynthesis of the maltose-1-phosphate (M1P) building block required for alpha-glucan production by the key enzyme GlgE. Catalyzes the formation of an alpha-1,4 linkage between glucose from ADP-glucose and glucose 1-phosphate (G1P) to yield maltose-1-phosphate (M1P). The polypeptide is Alpha-maltose-1-phosphate synthase (Mycobacterium tuberculosis (strain CDC 1551 / Oshkosh)).